Reading from the N-terminus, the 220-residue chain is MVEMNKRGQFFIIGGVILSIGLILFFLLGFNSYTSDGSYLTVFKMKDVKNSIESCLINSLTSNSNLSKNLDMLKNNYKDEGIEINYKKIIFSNIRYEAKNLTFNFSLYNGNFSYNISNYGFGGAFNGSLNVSNYVFSKNLLLNISENGSVTGSFNITGSYVNVFVYDRFGNLILNETIYNNSNEKSLYYYILNVSKEGILLYLLWQRMFLTTHWQKMYPL.

The helical transmembrane segment at 10-30 threads the bilayer; sequence FFIIGGVILSIGLILFFLLGF.

The protein resides in the membrane. This is an uncharacterized protein from Methanocaldococcus jannaschii (strain ATCC 43067 / DSM 2661 / JAL-1 / JCM 10045 / NBRC 100440) (Methanococcus jannaschii).